The primary structure comprises 72 residues: High-potential iron-sulfur protein isozyme 1 (72 aa).

[4Fe-4S] cluster is bound by residues Cys34, Cys37, Cys51, and Cys65.

Belongs to the high-potential iron-sulfur protein (HiPIP) family. Homodimer.

Specific class of high-redox-potential 4Fe-4S ferredoxins. Functions in anaerobic electron transport in most purple and in some other photosynthetic bacteria and in at least one genus (Paracoccus) of halophilic, denitrifying bacteria. This is High-potential iron-sulfur protein isozyme 1 (hip1) from Ectothiorhodospira shaposhnikovii (Ectothiorhodospira vacuolata).